A 277-amino-acid polypeptide reads, in one-letter code: Large ribosomal subunit protein uL2 (277 aa).

Disordered stretches follow at residues 1-20 (MAVKKYRPYTPSRRQMTTAD) and 210-277 (GRSR…RGGK). Residues 210–221 (GRSRWLGRKPHQ) are compositionally biased toward basic residues.

The protein belongs to the universal ribosomal protein uL2 family. As to quaternary structure, part of the 50S ribosomal subunit. Forms a bridge to the 30S subunit in the 70S ribosome.

In terms of biological role, one of the primary rRNA binding proteins. Required for association of the 30S and 50S subunits to form the 70S ribosome, for tRNA binding and peptide bond formation. It has been suggested to have peptidyltransferase activity; this is somewhat controversial. Makes several contacts with the 16S rRNA in the 70S ribosome. The sequence is that of Large ribosomal subunit protein uL2 from Deinococcus deserti (strain DSM 17065 / CIP 109153 / LMG 22923 / VCD115).